A 552-amino-acid polypeptide reads, in one-letter code: DNA ligase (552 aa).

Glutamate 229 contributes to the ATP binding site. The N6-AMP-lysine intermediate role is filled by lysine 231. Residues arginine 236 and glutamate 283 each contribute to the ATP site. Glutamate 283 and glutamate 377 together coordinate Mg(2+). Positions 382 and 397 each coordinate ATP.

The protein belongs to the ATP-dependent DNA ligase family. Interacts with host TOP2A and TOP2B. Mg(2+) is required as a cofactor.

Its subcellular location is the host cytoplasm. The enzyme catalyses ATP + (deoxyribonucleotide)n-3'-hydroxyl + 5'-phospho-(deoxyribonucleotide)m = (deoxyribonucleotide)n+m + AMP + diphosphate.. Functionally, DNA ligase that seals nicks in double-stranded DNA during DNA replication, DNA recombination and DNA repair. Recruits cellular topoisomerase II to sites of viral replication and assembly. In Vaccinia virus (strain Copenhagen) (VACV), this protein is DNA ligase (OPG180).